A 308-amino-acid chain; its full sequence is Acetyl-coenzyme A carboxylase carboxyl transferase subunit beta 1 (308 aa).

One can recognise a CoA carboxyltransferase N-terminal domain in the interval valine 25 to proline 294. Zn(2+) is bound by residues cysteine 29, cysteine 32, cysteine 48, and cysteine 51. The C4-type zinc-finger motif lies at cysteine 29–cysteine 51. A disordered region spans residues valine 288–glycine 308.

This sequence belongs to the AccD/PCCB family. In terms of assembly, acetyl-CoA carboxylase is a heterohexamer composed of biotin carboxyl carrier protein (AccB), biotin carboxylase (AccC) and two subunits each of ACCase subunit alpha (AccA) and ACCase subunit beta (AccD). Requires Zn(2+) as cofactor.

It is found in the cytoplasm. It catalyses the reaction N(6)-carboxybiotinyl-L-lysyl-[protein] + acetyl-CoA = N(6)-biotinyl-L-lysyl-[protein] + malonyl-CoA. It functions in the pathway lipid metabolism; malonyl-CoA biosynthesis; malonyl-CoA from acetyl-CoA: step 1/1. Component of the acetyl coenzyme A carboxylase (ACC) complex. Biotin carboxylase (BC) catalyzes the carboxylation of biotin on its carrier protein (BCCP) and then the CO(2) group is transferred by the transcarboxylase to acetyl-CoA to form malonyl-CoA. This chain is Acetyl-coenzyme A carboxylase carboxyl transferase subunit beta 1, found in Vibrio parahaemolyticus serotype O3:K6 (strain RIMD 2210633).